The following is a 236-amino-acid chain: Leucyl/phenylalanyl-tRNA--protein transferase (236 aa).

It belongs to the L/F-transferase family.

The protein resides in the cytoplasm. It catalyses the reaction N-terminal L-lysyl-[protein] + L-leucyl-tRNA(Leu) = N-terminal L-leucyl-L-lysyl-[protein] + tRNA(Leu) + H(+). The enzyme catalyses N-terminal L-arginyl-[protein] + L-leucyl-tRNA(Leu) = N-terminal L-leucyl-L-arginyl-[protein] + tRNA(Leu) + H(+). The catalysed reaction is L-phenylalanyl-tRNA(Phe) + an N-terminal L-alpha-aminoacyl-[protein] = an N-terminal L-phenylalanyl-L-alpha-aminoacyl-[protein] + tRNA(Phe). Functions in the N-end rule pathway of protein degradation where it conjugates Leu, Phe and, less efficiently, Met from aminoacyl-tRNAs to the N-termini of proteins containing an N-terminal arginine or lysine. This chain is Leucyl/phenylalanyl-tRNA--protein transferase, found in Vibrio atlanticus (strain LGP32) (Vibrio splendidus (strain Mel32)).